The following is a 146-amino-acid chain: Hemoglobin subunit beta (146 aa).

An N-acetylvaline modification is found at V1. The Globin domain maps to 2-146 (HLTGEEKAAV…VANALAHKYH (145 aa)). The residue at position 12 (T12) is a Phosphothreonine. Position 44 is a phosphoserine (S44). Residue K59 is modified to N6-acetyllysine. A heme b-binding site is contributed by H63. K82 is subject to N6-acetyllysine. H92 is a heme b binding site. S-nitrosocysteine is present on C93. An N6-acetyllysine modification is found at K144.

Belongs to the globin family. Heterotetramer of two alpha chains and two beta chains. As to expression, red blood cells.

In terms of biological role, involved in oxygen transport from the lung to the various peripheral tissues. The sequence is that of Hemoglobin subunit beta (HBB) from Martes foina (Beech marten).